The primary structure comprises 339 residues: Phenylalanine--tRNA ligase alpha subunit (339 aa).

Glu-250 lines the Mg(2+) pocket.

Belongs to the class-II aminoacyl-tRNA synthetase family. Phe-tRNA synthetase alpha subunit type 1 subfamily. In terms of assembly, tetramer of two alpha and two beta subunits. The cofactor is Mg(2+).

Its subcellular location is the cytoplasm. The enzyme catalyses tRNA(Phe) + L-phenylalanine + ATP = L-phenylalanyl-tRNA(Phe) + AMP + diphosphate + H(+). The protein is Phenylalanine--tRNA ligase alpha subunit of Azobacteroides pseudotrichonymphae genomovar. CFP2.